The following is a 364-amino-acid chain: Long-wave-sensitive opsin 1 (364 aa).

Topologically, residues 1-52 (MAHAWGPQRLAGGQPQANFEESTQGSIFTYTNSNSTRDPFEGPNYHIAPRWV) are extracellular. Ser-22 is a glycosylation site (O-linked (GlcNAc) serine). A glycan (N-linked (GlcNAc...) asparagine) is linked at Asn-34. A helical membrane pass occupies residues 53–77 (YHLTSAWMVFVVIASVFTNGLVLAA). The Cytoplasmic portion of the chain corresponds to 78-89 (TMRFKKLRHPLN). A helical transmembrane segment spans residues 90–115 (WILVNLAIADLAETIIASTISVVNQM). The Extracellular segment spans residues 116 to 129 (YGYFVLGHPLCVVE). Cys-126 and Cys-203 form a disulfide bridge. A helical transmembrane segment spans residues 130–149 (GYTVSLCGITGLWSLAIISW). Topologically, residues 150–168 (ERWMVVCKPFGNVRFDAKL) are cytoplasmic. A helical transmembrane segment spans residues 169–192 (AITGIAFSWIWAAVWTAPPIFGWS). Residues 193–218 (RYWPHGLKTSCGPDVFSGSSYPGVQS) are Extracellular-facing. Residues 219-246 (YMIVLMITCCFIPLSVIILCYLQVWLAI) traverse the membrane as a helical segment. The Cytoplasmic segment spans residues 247–268 (RAVAKQQKESESTQKAEKEVTR). The chain crosses the membrane as a helical span at residues 269–292 (MVMVMIFAYCLCWGPYTFFACFAA). At 293–300 (AHPGYAFH) the chain is on the extracellular side. A helical membrane pass occupies residues 301 to 325 (PLVAALPAYFAKSATIYNPIIYVFM). An N6-(retinylidene)lysine modification is found at Lys-312. Topologically, residues 326-364 (NRQFRNCILQLFGKKVDDSSELSSVSKTEASSVSSVSPA) are cytoplasmic.

This sequence belongs to the G-protein coupled receptor 1 family. Opsin subfamily. Phosphorylated on some or all of the serine and threonine residues present in the C-terminal region. In terms of tissue distribution, expressed in retina (at protein level). Expressed in cone and/or rod photoreceptor cells (at protein level).

It is found in the membrane. In terms of biological role, visual pigments are the light-absorbing molecules that mediate vision. They consist of an apoprotein, opsin, covalently linked to cis-retinal. The protein is Long-wave-sensitive opsin 1 (OPN1LW) of Bos taurus (Bovine).